We begin with the raw amino-acid sequence, 274 residues long: uncharacterized protein (274 aa).

104–111 (GVFAIGKS) contributes to the ATP binding site.

This is an uncharacterized protein from Mycoplasma genitalium (strain ATCC 33530 / DSM 19775 / NCTC 10195 / G37) (Mycoplasmoides genitalium).